We begin with the raw amino-acid sequence, 284 residues long: Ribosomal RNA small subunit methyltransferase A (284 aa).

Residues H23, L25, G50, E71, D92, and N121 each coordinate S-adenosyl-L-methionine.

It belongs to the class I-like SAM-binding methyltransferase superfamily. rRNA adenine N(6)-methyltransferase family. RsmA subfamily.

The protein resides in the cytoplasm. It carries out the reaction adenosine(1518)/adenosine(1519) in 16S rRNA + 4 S-adenosyl-L-methionine = N(6)-dimethyladenosine(1518)/N(6)-dimethyladenosine(1519) in 16S rRNA + 4 S-adenosyl-L-homocysteine + 4 H(+). Specifically dimethylates two adjacent adenosines (A1518 and A1519) in the loop of a conserved hairpin near the 3'-end of 16S rRNA in the 30S particle. May play a critical role in biogenesis of 30S subunits. This is Ribosomal RNA small subunit methyltransferase A from Verminephrobacter eiseniae (strain EF01-2).